We begin with the raw amino-acid sequence, 155 residues long: SsrA-binding protein (155 aa).

The protein belongs to the SmpB family.

It is found in the cytoplasm. In terms of biological role, required for rescue of stalled ribosomes mediated by trans-translation. Binds to transfer-messenger RNA (tmRNA), required for stable association of tmRNA with ribosomes. tmRNA and SmpB together mimic tRNA shape, replacing the anticodon stem-loop with SmpB. tmRNA is encoded by the ssrA gene; the 2 termini fold to resemble tRNA(Ala) and it encodes a 'tag peptide', a short internal open reading frame. During trans-translation Ala-aminoacylated tmRNA acts like a tRNA, entering the A-site of stalled ribosomes, displacing the stalled mRNA. The ribosome then switches to translate the ORF on the tmRNA; the nascent peptide is terminated with the 'tag peptide' encoded by the tmRNA and targeted for degradation. The ribosome is freed to recommence translation, which seems to be the essential function of trans-translation. The protein is SsrA-binding protein of Bacillus cereus (strain 03BB102).